Consider the following 201-residue polypeptide: uncharacterized protein (201 aa).

This is an uncharacterized protein from Bacillus subtilis (strain 168).